We begin with the raw amino-acid sequence, 238 residues long: Ribonuclease PH (238 aa).

Residues Arg-86 and Gly-124–Arg-126 contribute to the phosphate site.

This sequence belongs to the RNase PH family. As to quaternary structure, homohexameric ring arranged as a trimer of dimers.

It catalyses the reaction tRNA(n+1) + phosphate = tRNA(n) + a ribonucleoside 5'-diphosphate. Functionally, phosphorolytic 3'-5' exoribonuclease that plays an important role in tRNA 3'-end maturation. Removes nucleotide residues following the 3'-CCA terminus of tRNAs; can also add nucleotides to the ends of RNA molecules by using nucleoside diphosphates as substrates, but this may not be physiologically important. Probably plays a role in initiation of 16S rRNA degradation (leading to ribosome degradation) during starvation. In Actinobacillus pleuropneumoniae serotype 7 (strain AP76), this protein is Ribonuclease PH.